The primary structure comprises 161 residues: ATP synthase subunit b (161 aa).

The helical transmembrane segment at 1-21 (MYLNATILGQVIAFILFVWFC) threads the bilayer.

It belongs to the ATPase B chain family. As to quaternary structure, F-type ATPases have 2 components, F(1) - the catalytic core - and F(0) - the membrane proton channel. F(1) has five subunits: alpha(3), beta(3), gamma(1), delta(1), epsilon(1). F(0) has three main subunits: a(1), b(2) and c(10-14). The alpha and beta chains form an alternating ring which encloses part of the gamma chain. F(1) is attached to F(0) by a central stalk formed by the gamma and epsilon chains, while a peripheral stalk is formed by the delta and b chains.

It is found in the cell inner membrane. Its function is as follows. F(1)F(0) ATP synthase produces ATP from ADP in the presence of a proton or sodium gradient. F-type ATPases consist of two structural domains, F(1) containing the extramembraneous catalytic core and F(0) containing the membrane proton channel, linked together by a central stalk and a peripheral stalk. During catalysis, ATP synthesis in the catalytic domain of F(1) is coupled via a rotary mechanism of the central stalk subunits to proton translocation. In terms of biological role, component of the F(0) channel, it forms part of the peripheral stalk, linking F(1) to F(0). The chain is ATP synthase subunit b from Blochmanniella floridana.